Consider the following 115-residue polypeptide: Large ribosomal subunit protein bL20 (115 aa).

The protein belongs to the bacterial ribosomal protein bL20 family.

Binds directly to 23S ribosomal RNA and is necessary for the in vitro assembly process of the 50S ribosomal subunit. It is not involved in the protein synthesizing functions of that subunit. The polypeptide is Large ribosomal subunit protein bL20 (Borrelia hermsii (strain HS1 / DAH)).